The chain runs to 401 residues: Probable tRNA sulfurtransferase (401 aa).

The THUMP domain maps to T63 to R168. ATP-binding positions include L186 to L187, Y211 to F212, R268, G290, and Q299.

It belongs to the ThiI family.

The protein resides in the cytoplasm. It catalyses the reaction [ThiI sulfur-carrier protein]-S-sulfanyl-L-cysteine + a uridine in tRNA + 2 reduced [2Fe-2S]-[ferredoxin] + ATP + H(+) = [ThiI sulfur-carrier protein]-L-cysteine + a 4-thiouridine in tRNA + 2 oxidized [2Fe-2S]-[ferredoxin] + AMP + diphosphate. It carries out the reaction [ThiS sulfur-carrier protein]-C-terminal Gly-Gly-AMP + S-sulfanyl-L-cysteinyl-[cysteine desulfurase] + AH2 = [ThiS sulfur-carrier protein]-C-terminal-Gly-aminoethanethioate + L-cysteinyl-[cysteine desulfurase] + A + AMP + 2 H(+). The protein operates within cofactor biosynthesis; thiamine diphosphate biosynthesis. In terms of biological role, catalyzes the ATP-dependent transfer of a sulfur to tRNA to produce 4-thiouridine in position 8 of tRNAs, which functions as a near-UV photosensor. Also catalyzes the transfer of sulfur to the sulfur carrier protein ThiS, forming ThiS-thiocarboxylate. This is a step in the synthesis of thiazole, in the thiamine biosynthesis pathway. The sulfur is donated as persulfide by IscS. This chain is Probable tRNA sulfurtransferase, found in Treponema pallidum (strain Nichols).